A 135-amino-acid polypeptide reads, in one-letter code: Gene 52 protein (135 aa).

Disordered regions lie at residues 1–20 (MASG…PTPE) and 110–135 (LGGR…AEKQ). Residues 122 to 135 (SKPRGRSKHRAEKQ) show a composition bias toward basic residues.

Belongs to the herpesviridae BLRF2 family.

In Equine herpesvirus 2 (strain 86/87) (EHV-2), this protein is Gene 52 protein (52).